The sequence spans 367 residues: MRKYHSNIMHKIITFVSLLWTFVVCDEISLHTSSSPPPLSSPVPVLYYNLDQSEIYFKHFLQQYNKSYDDPKEYQYRYNVFKDNLNKINSQNRENLLNNKNNNDSLSTSAQFGVNKFSDKTPDEVLHSNTGFFLNLSQHYTLCENRIVKGAPDIRLPDYYDWRDTNKVTPIKDQGVCGSCWAFVAIGNIESQYAIRHNKLIDLSEQQLLDCDEVDLGCNGGLMHLAFQELLLMGGVETEADYPYQGSEQMCTLDNRKIAVKLNSCFKYDIRDENKLKELVYTTGPVAIAVDAMDIINYRRGILNQCHIYDLNHAVLLIGWGIENNVPYWIIKNSWGEDWGENGFLRVRRNVNACGLLNEFGASSVIQ.

An N-terminal signal peptide occupies residues 1 to 25; sequence MRKYHSNIMHKIITFVSLLWTFVVC. Residues 26–156 constitute a propeptide, activation peptide; it reads DEISLHTSSS…IVKGAPDIRL (131 aa). N-linked (GlcNAc...) asparagine; by host glycans are attached at residues Asn103 and Asn135. Intrachain disulfides connect Cys177–Cys218, Cys211–Cys251, and Cys306–Cys354. Cys180 is a catalytic residue. Residues His313 and Asn333 contribute to the active site.

Belongs to the peptidase C1 family. In terms of processing, synthesized as an inactive proenzyme and activated by proteolytic removal of the inhibitory propeptide.

It catalyses the reaction Endopeptidase of broad specificity, hydrolyzing substrates of both cathepsin L and cathepsin B.. In terms of biological role, cysteine protease that plays an essential role in host liquefaction to facilitate horizontal transmission of the virus. May participate in the degradation of foreign protein expressed by the baculovirus system. The chain is Viral cathepsin (VCATH) from Lepidoptera (butterflies and moths).